The chain runs to 242 residues: Mannosyl-3-phosphoglycerate phosphatase (242 aa).

Aspartate 8 functions as the Nucleophile in the catalytic mechanism. The Mg(2+) site is built by aspartate 8, aspartate 10, serine 169, and aspartate 204.

It belongs to the HAD-like hydrolase superfamily. MPGP family. The cofactor is Mg(2+).

It localises to the cytoplasm. The enzyme catalyses 2-O-(alpha-D-mannosyl)-3-phosphoglycerate + H2O = (2R)-2-O-(alpha-D-mannosyl)-glycerate + phosphate. Its pathway is carbohydrate biosynthesis; 2-(alpha-D-mannosyl)-D-glycerate biosynthesis; 2-(alpha-D-mannosyl)-D-glycerate from GDP-alpha-D-mannose (MPG route): step 2/2. Functionally, hydrolyzes mannosyl-3-phosphoglycerate (MPG) to form the osmolyte mannosylglycerate (MG). The sequence is that of Mannosyl-3-phosphoglycerate phosphatase from Pyrococcus furiosus (strain ATCC 43587 / DSM 3638 / JCM 8422 / Vc1).